The following is a 76-amino-acid chain: Theta defensin subunit B (76 aa).

The signal sequence occupies residues 1–22; that stretch reads MRTFALLTAMLLLVALQPQAEA. The propeptide occupies 23–64; that stretch reads RQARADEAAAQQQPGADDQGMAHSFTRPENAALPLSESAKGL. The tract at residues 24-54 is disordered; the sequence is QARADEAAAQQQPGADDQGMAHSFTRPENAA. Residues 30-44 are compositionally biased toward low complexity; the sequence is AAAQQQPGADDQGMA. Arginine 65 participates in a covalent cross-link: Cyclopeptide (Arg-Cys) (interchain with C-73 in subunit A); in form BTD-1. A Cyclopeptide (Arg-Cys) (interchain with C-73 in subunit B); in form BTD-2 cross-link involves residue arginine 65. Cysteine 68 and cysteine 73 form a disulfide bridge. Cysteine 73 participates in a covalent cross-link: Cyclopeptide (Cys-Arg) (interchain with R-65 in subunit A); in form BTD-1. Cysteine 73 is covalently cross-linked (Cyclopeptide (Cys-Arg) (interchain with R-65 in subunit B); in form BTD-2). Positions 74 to 76 are excised as a propeptide; sequence QLL.

It belongs to the alpha-defensin family. Theta subfamily. BTD-1 is a cyclic heterodimer composed of subunits A and B; disulfide-linked. BTD-2 is a cyclic homodimer composed of two subunits B; disulfide-linked. Post-translationally, forms a cyclic peptide with subunit A (BTD-1), or subunit B (BTD-2). An additional intersubunit disulfide bond is formed.

BTD-1 and BTD-2 have antimicrobial activity against the Gram-negative bacterium E.coli ML35, the Gram-positive bacterium S.aureus 502a, and the fungus C.albicans 16820. BTD-2 is more effective against E.coli than BTD-1. The protein is Theta defensin subunit B (BTDB) of Papio anubis (Olive baboon).